A 288-amino-acid polypeptide reads, in one-letter code: Acetyl-coenzyme A carboxylase carboxyl transferase subunit beta (288 aa).

The region spanning 34 to 288 is the CoA carboxyltransferase N-terminal domain; that stretch reads LFAKCPACKH…HLVSFHGGGQ (255 aa). The Zn(2+) site is built by C38, C41, C56, and C59. The C4-type zinc-finger motif lies at 38-59; the sequence is CPACKHMIYKKDLGLAKICPTC.

This sequence belongs to the AccD/PCCB family. As to quaternary structure, acetyl-CoA carboxylase is a heterohexamer composed of biotin carboxyl carrier protein (AccB), biotin carboxylase (AccC) and two subunits each of ACCase subunit alpha (AccA) and ACCase subunit beta (AccD). Requires Zn(2+) as cofactor.

It is found in the cytoplasm. The catalysed reaction is N(6)-carboxybiotinyl-L-lysyl-[protein] + acetyl-CoA = N(6)-biotinyl-L-lysyl-[protein] + malonyl-CoA. It participates in lipid metabolism; malonyl-CoA biosynthesis; malonyl-CoA from acetyl-CoA: step 1/1. Functionally, component of the acetyl coenzyme A carboxylase (ACC) complex. Biotin carboxylase (BC) catalyzes the carboxylation of biotin on its carrier protein (BCCP) and then the CO(2) group is transferred by the transcarboxylase to acetyl-CoA to form malonyl-CoA. The protein is Acetyl-coenzyme A carboxylase carboxyl transferase subunit beta of Streptococcus pyogenes serotype M49 (strain NZ131).